The sequence spans 134 residues: CDGSH iron-sulfur domain-containing protein 2 homolog (134 aa).

Residues 1-35 are Lumenal-facing; it reads MESLSHLVKSTLPNYLSNLPVPDTLGGWFKLSFKD. Residues 36-58 form a helical membrane-spanning segment; the sequence is WLALIPPTVVVAGIGYTGYLAFC. The Cytoplasmic portion of the chain corresponds to 59 to 134; the sequence is PAAQDRCSAK…DNVGPVVVKK (76 aa). 4 residues coordinate [2Fe-2S] cluster: C101, C103, C112, and H116.

Belongs to the CISD protein family. CISD2 subfamily. [2Fe-2S] cluster serves as cofactor.

Its subcellular location is the endoplasmic reticulum membrane. The polypeptide is CDGSH iron-sulfur domain-containing protein 2 homolog (Drosophila willistoni (Fruit fly)).